Here is a 418-residue protein sequence, read N- to C-terminus: Tyrosine--tRNA ligase (418 aa).

Y34 contributes to the L-tyrosine binding site. The short motif at 39–48 (PTADSLHLGH) is the 'HIGH' region element. The L-tyrosine site is built by Y169 and Q173. The 'KMSKS' region signature appears at 229–233 (KFGKS). K232 provides a ligand contact to ATP. The S4 RNA-binding domain maps to 352-418 (HNIVEILVAA…GKKKYAVLTY (67 aa)).

The protein belongs to the class-I aminoacyl-tRNA synthetase family. TyrS type 1 subfamily. As to quaternary structure, homodimer.

The protein resides in the cytoplasm. The catalysed reaction is tRNA(Tyr) + L-tyrosine + ATP = L-tyrosyl-tRNA(Tyr) + AMP + diphosphate + H(+). Catalyzes the attachment of tyrosine to tRNA(Tyr) in a two-step reaction: tyrosine is first activated by ATP to form Tyr-AMP and then transferred to the acceptor end of tRNA(Tyr). The chain is Tyrosine--tRNA ligase from Streptococcus pyogenes serotype M49 (strain NZ131).